The following is a 713-amino-acid chain: Calpastatin (713 aa).

Positions M1–S21 are enriched in low complexity. Residues M1 to G152 form a disordered region. Polar residues predominate over residues V47 to G64. At S57 the chain carries Phosphoserine. K69 is covalently cross-linked (Glycyl lysine isopeptide (Lys-Gly) (interchain with G-Cter in SUMO2)). An N6-acetyllysine modification is found at K86. Residues S120–E129 are compositionally biased toward polar residues. 2 positions are modified to phosphoserine: S122 and S171. Residue T173 is modified to Phosphothreonine. One copy of the Inhibitory domain 1 repeat lies at T208–S260. Residues I253–E402 form a disordered region. S260 and S281 each carry phosphoserine. Composition is skewed to polar residues over residues S275 to K285, G294 to V304, and Q326 to L346. The Inhibitory domain 2 repeat unit spans residues D341–P393. 2 stretches are compositionally biased toward basic and acidic residues: residues Q351–C365 and Y376–K387. A phosphoserine mark is found at S401, S403, S410, and S445. The disordered stretch occupies residues L442–Q507. The span at T448–E505 shows a compositional bias: basic and acidic residues. The stretch at E451–A504 is one Inhibitory domain 3 repeat. A phosphoserine mark is found at S521 and S532. The span at V544–T558 shows a compositional bias: polar residues. Residues V544–T713 are disordered. Phosphoserine is present on residues S580 and S582. One copy of the Inhibitory domain 4 repeat lies at P588 to K641. 2 stretches are compositionally biased toward basic and acidic residues: residues P588 to Q648 and S687 to T713.

Belongs to the protease inhibitor I27 (calpastatin) family.

Specific inhibition of calpain (calcium-dependent cysteine protease). Plays a key role in postmortem tenderization of meat and have been proposed to be involved in muscle protein degradation in living tissue. This is Calpastatin (Cast) from Rattus norvegicus (Rat).